A 138-amino-acid chain; its full sequence is Putative transcriptional regulatory protein NedR (138 aa).

The interval 1–25 (MCWGRSWTFGRSSSKGWRPTSSASS) is disordered. Polar residues predominate over residues 9–25 (FGRSSSKGWRPTSSASS).

Its function is as follows. May serve as a transcriptional regulator. The chain is Putative transcriptional regulatory protein NedR (nedR) from Micromonospora viridifaciens.